Reading from the N-terminus, the 763-residue chain is Xaa-Pro dipeptidyl-peptidase (763 aa).

Active-site charge relay system residues include serine 348, aspartate 468, and histidine 498.

This sequence belongs to the peptidase S15 family. In terms of assembly, homodimer.

The protein resides in the cytoplasm. The enzyme catalyses Hydrolyzes Xaa-Pro-|- bonds to release unblocked, N-terminal dipeptides from substrates including Ala-Pro-|-p-nitroanilide and (sequentially) Tyr-Pro-|-Phe-Pro-|-Gly-Pro-|-Ile.. Its function is as follows. Removes N-terminal dipeptides sequentially from polypeptides having unsubstituted N-termini provided that the penultimate residue is proline. This Lactococcus lactis subsp. cremoris (strain SK11) protein is Xaa-Pro dipeptidyl-peptidase.